Consider the following 334-residue polypeptide: Ornithine carbamoyltransferase (334 aa).

Residues 57–60, Gln-84, Arg-108, and 135–138 contribute to the carbamoyl phosphate site; these read STRT and HPTQ. Residues Asn-168, Asp-233, and 237 to 238 each bind L-ornithine; that span reads SM. Residues 275–276 and Arg-320 contribute to the carbamoyl phosphate site; that span reads CL.

Belongs to the aspartate/ornithine carbamoyltransferase superfamily. OTCase family.

The protein localises to the cytoplasm. It catalyses the reaction carbamoyl phosphate + L-ornithine = L-citrulline + phosphate + H(+). Its pathway is amino-acid biosynthesis; L-arginine biosynthesis; L-arginine from L-ornithine and carbamoyl phosphate: step 1/3. In terms of biological role, reversibly catalyzes the transfer of the carbamoyl group from carbamoyl phosphate (CP) to the N(epsilon) atom of ornithine (ORN) to produce L-citrulline. The chain is Ornithine carbamoyltransferase from Thermobifida fusca (strain YX).